Reading from the N-terminus, the 104-residue chain is Increased recombination centers protein 13 (104 aa).

A helical transmembrane segment spans residues 63-83; sequence LVHLFSYVFFLFLLKICVDVL.

It localises to the membrane. May be involved in a pathway contributing to genomic integrity. The sequence is that of Increased recombination centers protein 13 (IRC13) from Saccharomyces cerevisiae (strain ATCC 204508 / S288c) (Baker's yeast).